The sequence spans 599 residues: MSDLSHIRNFSIIAHIDHGKSTLADRFIQMCGGLSAREMEAQVLDSMDLERERGITIKAHSVTLHYKALDGKTYQLNFIDTPGHVDFTYEVSRSLAACEGALLVVDAGQGVEAQSVANCYTAIEQGLEVMPVLNKMDLPQADPDRVKDEIEKIIGIDATDAVACSAKSGMGVDEVLERLVHTIPAPVGEIDAPLQALIIDSWFDNYLGVVSLVRVRQGRVKKGDKILVKSTGKVHLVDSVGVFTPKHTQTADLKAGEVGFIIASIKDIHGAPVGDTLTLSSTPEVEMLAGFKKIQPQVYAGLFPVSSDDFEDFRDALQKLTLNDSSLQYMPESSDALGFGFRCGFLGMLHMEIIQERLEREYDLDLITTAPSVIYELELKTGETIVVDNPSKLPDVSSVTDFREPIVTATILVPQEHLGNVITLCIEKRGVQRDMQFLGSQVQVRYDMPMNEVVLDFFDRLKSTSRGYASLDYHFDRYQSANLVKLDVLINGDKVDALALIVHRDNAAYKGRALTEKMKELIPRQMFDVAIQAAIGGQIIARTTVKALRKNVLAKCYGGDVSRKKKLLEKQKAGKKRMKQVGNVEIPQEAFLAVLRLDS.

The tr-type G domain occupies 5–187 (SHIRNFSIIA…RLVHTIPAPV (183 aa)). GTP contacts are provided by residues 17 to 22 (DHGKST) and 134 to 137 (NKMD).

This sequence belongs to the TRAFAC class translation factor GTPase superfamily. Classic translation factor GTPase family. LepA subfamily.

It is found in the cell inner membrane. It catalyses the reaction GTP + H2O = GDP + phosphate + H(+). Its function is as follows. Required for accurate and efficient protein synthesis under certain stress conditions. May act as a fidelity factor of the translation reaction, by catalyzing a one-codon backward translocation of tRNAs on improperly translocated ribosomes. Back-translocation proceeds from a post-translocation (POST) complex to a pre-translocation (PRE) complex, thus giving elongation factor G a second chance to translocate the tRNAs correctly. Binds to ribosomes in a GTP-dependent manner. The protein is Elongation factor 4 of Pseudomonas putida (strain W619).